We begin with the raw amino-acid sequence, 71 residues long: MAAKLKKGSLVRVIKEQFTNSLEAKASDSRLPAYFFGSQGEILDLDDEYAFVRFYTPTPSVWLRLDQLEAV.

The protein belongs to the complex I NdhO subunit family. In terms of assembly, NDH-1 can be composed of about 15 different subunits; different subcomplexes with different compositions have been identified which probably have different functions.

The protein resides in the cellular thylakoid membrane. It catalyses the reaction a plastoquinone + NADH + (n+1) H(+)(in) = a plastoquinol + NAD(+) + n H(+)(out). The catalysed reaction is a plastoquinone + NADPH + (n+1) H(+)(in) = a plastoquinol + NADP(+) + n H(+)(out). Its function is as follows. NDH-1 shuttles electrons from an unknown electron donor, via FMN and iron-sulfur (Fe-S) centers, to quinones in the respiratory and/or the photosynthetic chain. The immediate electron acceptor for the enzyme in this species is believed to be plastoquinone. Couples the redox reaction to proton translocation, and thus conserves the redox energy in a proton gradient. Cyanobacterial NDH-1 also plays a role in inorganic carbon-concentration. In Picosynechococcus sp. (strain ATCC 27264 / PCC 7002 / PR-6) (Agmenellum quadruplicatum), this protein is NAD(P)H-quinone oxidoreductase subunit O.